The chain runs to 106 residues: UPF0145 protein Pfl01_1745 (106 aa).

It belongs to the UPF0145 family.

The chain is UPF0145 protein Pfl01_1745 from Pseudomonas fluorescens (strain Pf0-1).